The chain runs to 232 residues: Alpha N-terminal protein methyltransferase 1 (232 aa).

Residues glycine 71, arginine 76, 123-124, and glutamine 139 contribute to the S-adenosyl-L-methionine site; that span reads MQ.

Belongs to the methyltransferase superfamily. NTM1 family.

The protein localises to the cytoplasm. The enzyme catalyses N-terminal L-alanyl-L-prolyl-L-lysyl-[protein] + 3 S-adenosyl-L-methionine = N-terminal N,N,N-trimethyl-L-alanyl-L-prolyl-L-lysyl-[protein] + 3 S-adenosyl-L-homocysteine + 3 H(+). The catalysed reaction is N-terminal L-seryl-L-prolyl-L-lysyl-[protein] + 3 S-adenosyl-L-methionine = N-terminal N,N,N-trimethyl-L-seryl-L-prolyl-L-lysyl-[protein] + 3 S-adenosyl-L-homocysteine + 3 H(+). It carries out the reaction N-terminal L-prolyl-L-prolyl-L-lysyl-[protein] + 2 S-adenosyl-L-methionine = N-terminal N,N-dimethyl-L-prolyl-L-prolyl-L-lysyl-[protein] + 2 S-adenosyl-L-homocysteine + 2 H(+). Functionally, alpha-N-methyltransferase that methylates the N-terminus of target proteins containing the N-terminal motif [Ala/Pro/Ser]-Pro-Lys when the initiator Met is cleaved. Specifically catalyzes mono-, di- or tri-methylation of exposed alpha-amino group of Ala or Ser residue in the [Ala/Ser]-Pro-Lys motif and mono- or di-methylation of Pro in the Pro-Pro-Lys motif. Responsible for the N-terminal methylation of the ribosomal proteins RPL12A, RPL12B, RPS25A and RPS25B. The sequence is that of Alpha N-terminal protein methyltransferase 1 (TAE1) from Saccharomyces cerevisiae (strain ATCC 204508 / S288c) (Baker's yeast).